We begin with the raw amino-acid sequence, 2793 residues long: Iterative polyketide synthase afoE (2793 aa).

The N-terminal acylcarrier protein transacylase domain (SAT) stretch occupies residues 1–401 (MTRASASGSG…PEKPSFWLTP (401 aa)). The active-site Nucleophile; for transacylase activity is the cysteine 157. The Proton donor/acceptor; for transacylase activity role is filled by histidine 279. The region spanning 435-862 (SEPIAIVGMS…GSNASMIVTQ (428 aa)) is the Ketosynthase family 3 (KS3) domain. Residues cysteine 611, histidine 746, and histidine 785 each act as for beta-ketoacyl synthase activity in the active site. The malonyl-CoA:ACP transacylase (MAT) stretch occupies residues 977–1265 (FGGQISRFVG…SSTITVMAGR (289 aa)). The tract at residues 1384–1515 (WEFVGYQDDE…ATVEMRSSSD (132 aa)) is N-terminal hotdog fold. The PKS/mFAS DH domain occupies 1384-1698 (WEFVGYQDDE…YMRVAKASMS (315 aa)). Residues 1411–1696 (YVLSHVIAQT…VQYMRVAKAS (286 aa)) form a product template (PT) domain region. The Proton acceptor; for dehydratase activity role is filled by histidine 1415. The segment at 1550 to 1698 (VEVLQGRNVY…YMRVAKASMS (149 aa)) is C-terminal hotdog fold. The active-site Proton donor; for dehydratase activity is aspartate 1607. The segment at 1734-1776 (PEVRASSEPGAKVKASKTSKKEKKEKKPVTKAKSKSSKPSGWR) is disordered. A compositionally biased stretch (basic residues) spans 1747-1769 (KASKTSKKEKKEKKPVTKAKSKS). In terms of domain architecture, Carrier spans 1776–1850 (RDITEEVRNL…KFVQCVSNAL (75 aa)). An O-(pantetheine 4'-phosphoryl)serine modification is found at serine 1810. Residues 1853–1903 (PNAGPAEAEDDEDEEKSDNSSSESASESDDAGSESSDTGILTPTGEEEQPL) are disordered. The segment covering 1859–1868 (EAEDDEDEEK) has biased composition (acidic residues). Positions 2115–2294 (NLLAERIGRT…HVDWTDGNLP (180 aa)) are methyltransferase domain. Residues 2360–2379 (SRAEKESGKTQAPHAAPGRR) are disordered. The interval 2387–2630 (VTGATGSLGS…QWIPVDYCAA (244 aa)) is NADPH-binding domain.

Pantetheine 4'-phosphate serves as cofactor.

It carries out the reaction (3E,5E,7S)-5,7-dimethyl-2-oxonona-3,5-dienyl-[ACP] + 4 malonyl-CoA + AH2 + S-adenosyl-L-methionine + 3 H(+) = 6-[(3E,5E,7S)-5,7-dimethyl-2-oxonona-3,5-dienyl]-2,4-dihydroxy-3-methylbenzaldehyde + holo-[ACP] + A + S-adenosyl-L-homocysteine + 4 CO2 + 4 CoA + H2O. It participates in secondary metabolite biosynthesis. Functionally, iterative polyketide synthase; part of the gene cluster that mediates the biosynthesis of asperfuranone, a probable antitumor agent. The polyketide synthase afoG is responsible for producing the 3,5-dimethyloctadienone moiety from acetyl-CoA, three malonyl-CoA, and two S-adenosyl methionines (SAM). The 3,5-dimethyloctadienone moiety is then loaded onto the SAT domain of afoE and extended with four malonyl-CoA and one SAM, which leads to the formation of 2,4-dihydroxy-6-(5,7-dimethyl-2-oxo-trans-3-trans-5-nonadienyl)-3-methylbenzaldehyde (compound 2) after reductive release and aldol condensation. AfoD is the next enzyme in the biosynthesis sequence and hydroxylates the side chain at the benzylic position of compound 2. After benzylic hydroxylation, a furan ring is formed after five-member ring hemiacetal formation and water elimination. AfoF and afoC are proposed to oxidize the R-diketone proton and to reduce the unconjugated carbonyl group, respectively, to generate asperfuranone. Since no intermediates could be isolated from afoF and afoC deletants, the sequence of these two enzymes is not fully understood. Moreover, since afoC deletant still produces a small amount of asperfuranone, other endogenous oxidoreductases might catalyze the same reaction with much less efficiency. The polypeptide is Iterative polyketide synthase afoE (Emericella nidulans (strain FGSC A4 / ATCC 38163 / CBS 112.46 / NRRL 194 / M139) (Aspergillus nidulans)).